A 459-amino-acid polypeptide reads, in one-letter code: Alcohol acyl transferase 2 (459 aa).

Active-site proton acceptor residues include His-164 and Asn-385.

Belongs to the plant acyltransferase family. As to expression, highly expressed in the cortex and skin of ripe fruit.

Functionally, involved in the biosynthesis of volatile esters which confer ripe apple fruit flavor. Alcohol acyl transferase that can use a wide range of alcohols as substrate to produce esters. In Malus domestica (Apple), this protein is Alcohol acyl transferase 2.